A 924-amino-acid polypeptide reads, in one-letter code: Translation initiation factor IF-2 (924 aa).

The interval proline 118 to leucine 325 is disordered. Composition is skewed to pro residues over residues alanine 150 to arginine 173 and isoleucine 192 to serine 201. The segment covering alanine 202–glycine 212 has biased composition (low complexity). A compositionally biased stretch (gly residues) spans arginine 229–glycine 295. A compositionally biased stretch (basic residues) spans arginine 299–lysine 308. The tr-type G domain occupies valine 420–leucine 591. The tract at residues glycine 429 to threonine 436 is G1. Glycine 429–threonine 436 is a GTP binding site. Positions glycine 454 to histidine 458 are G2. The G3 stretch occupies residues aspartate 479 to glycine 482. GTP-binding positions include aspartate 479–histidine 483 and asparagine 533–aspartate 536. The segment at asparagine 533–aspartate 536 is G4. Residues serine 569–lysine 571 form a G5 region.

This sequence belongs to the TRAFAC class translation factor GTPase superfamily. Classic translation factor GTPase family. IF-2 subfamily.

It localises to the cytoplasm. Functionally, one of the essential components for the initiation of protein synthesis. Protects formylmethionyl-tRNA from spontaneous hydrolysis and promotes its binding to the 30S ribosomal subunits. Also involved in the hydrolysis of GTP during the formation of the 70S ribosomal complex. This is Translation initiation factor IF-2 from Mycobacterium leprae (strain Br4923).